The primary structure comprises 167 residues: GTP-dependent dephospho-CoA kinase (167 aa).

Residues Asp-39, Val-41, Asp-58, Lys-60, and Glu-117 each coordinate GTP.

This sequence belongs to the GTP-dependent DPCK family.

It carries out the reaction 3'-dephospho-CoA + GTP = GDP + CoA + H(+). The protein operates within cofactor biosynthesis; coenzyme A biosynthesis. Catalyzes the GTP-dependent phosphorylation of the 3'-hydroxyl group of dephosphocoenzyme A to form coenzyme A (CoA). In Korarchaeum cryptofilum (strain OPF8), this protein is GTP-dependent dephospho-CoA kinase.